Here is a 157-residue protein sequence, read N- to C-terminus: AP-1 complex subunit sigma-2 (157 aa).

This sequence belongs to the adaptor complexes small subunit family. Adaptor protein complex 1 (AP-1) is a heterotetramer composed of two large adaptins (gamma-type subunit AP1G1 and beta-type subunit AP1B1), a medium adaptin (mu-type subunit AP1M1 or AP1M2) and a small adaptin (sigma-type subunit AP1S1 or AP1S2 or AP1S3). Binds to MUC1. As to expression, widely expressed.

It localises to the golgi apparatus. The protein localises to the cytoplasmic vesicle membrane. Its subcellular location is the membrane. The protein resides in the clathrin-coated pit. Its function is as follows. Subunit of clathrin-associated adaptor protein complex 1 that plays a role in protein sorting in the late-Golgi/trans-Golgi network (TGN) and/or endosomes. The AP complexes mediate both the recruitment of clathrin to membranes and the recognition of sorting signals within the cytosolic tails of transmembrane cargo molecules. The sequence is that of AP-1 complex subunit sigma-2 (AP1S2) from Homo sapiens (Human).